A 332-amino-acid chain; its full sequence is Ornithine carbamoyltransferase, catabolic (332 aa).

Carbamoyl phosphate contacts are provided by residues 60–63 (STRT), Gln87, Arg111, and 138–141 (HPTQ). L-ornithine-binding positions include Asn170, Asp230, and 234-235 (SM). Carbamoyl phosphate-binding positions include 271 to 272 (CL) and Arg316.

It belongs to the aspartate/ornithine carbamoyltransferase superfamily. OTCase family.

The protein resides in the cytoplasm. It carries out the reaction carbamoyl phosphate + L-ornithine = L-citrulline + phosphate + H(+). It functions in the pathway amino-acid degradation; L-arginine degradation via ADI pathway; carbamoyl phosphate from L-arginine: step 2/2. Functionally, reversibly catalyzes the transfer of the carbamoyl group from carbamoyl phosphate (CP) to the N(epsilon) atom of ornithine (ORN) to produce L-citrulline. This is Ornithine carbamoyltransferase, catabolic from Bacillus cereus (strain ATCC 10987 / NRS 248).